The following is a 330-amino-acid chain: Aspartate--ammonia ligase (330 aa).

Belongs to the class-II aminoacyl-tRNA synthetase family. AsnA subfamily.

The protein resides in the cytoplasm. It catalyses the reaction L-aspartate + NH4(+) + ATP = L-asparagine + AMP + diphosphate + H(+). Its pathway is amino-acid biosynthesis; L-asparagine biosynthesis; L-asparagine from L-aspartate (ammonia route): step 1/1. The polypeptide is Aspartate--ammonia ligase (Yersinia pseudotuberculosis serotype O:1b (strain IP 31758)).